The sequence spans 400 residues: Subtilisin-like protease 7 (400 aa).

A signal peptide spans 1 to 20 (MGFITKAIPLALAAMSVVNG). Residues 21 to 119 (AEILETRAGV…IERDARVQIN (99 aa)) constitute a propeptide that is removed on maturation. The Inhibitor I9 domain maps to 36–118 (KYIVIMNDGV…YIERDARVQI (83 aa)). Positions 129 to 400 (SWGLARVGSR…GKLINNGSGK (272 aa)) constitute a Peptidase S8 domain. Residues D161 and H192 each act as charge relay system in the active site. Residues N222 and N252 are each glycosylated (N-linked (GlcNAc...) asparagine). The active-site Charge relay system is the S346. N-linked (GlcNAc...) asparagine glycosylation occurs at N396.

Belongs to the peptidase S8 family.

Its subcellular location is the secreted. Secreted subtilisin-like serine protease with keratinolytic activity that contributes to pathogenicity. In Arthroderma otae (strain ATCC MYA-4605 / CBS 113480) (Microsporum canis), this protein is Subtilisin-like protease 7 (SUB7).